A 464-amino-acid polypeptide reads, in one-letter code: Glutamate--tRNA ligase (464 aa).

Positions 9–19 (PSPTGYLHIGG) match the 'HIGH' region motif. The short motif at 242–246 (KISKR) is the 'KMSKS' region element. An ATP-binding site is contributed by lysine 245.

This sequence belongs to the class-I aminoacyl-tRNA synthetase family. Glutamate--tRNA ligase type 1 subfamily. Monomer.

The protein localises to the cytoplasm. The catalysed reaction is tRNA(Glu) + L-glutamate + ATP = L-glutamyl-tRNA(Glu) + AMP + diphosphate. Functionally, catalyzes the attachment of glutamate to tRNA(Glu) in a two-step reaction: glutamate is first activated by ATP to form Glu-AMP and then transferred to the acceptor end of tRNA(Glu). This Neisseria gonorrhoeae (strain ATCC 700825 / FA 1090) protein is Glutamate--tRNA ligase.